Reading from the N-terminus, the 95-residue chain is Orphan antitoxin ParD2 (95 aa).

Antitoxin component of a non-functional type II toxin-antitoxin (TA system). Does not neutralize the effect of any of the RelE or ParE toxins. This chain is Orphan antitoxin ParD2 (parD2), found in Caulobacter vibrioides (strain ATCC 19089 / CIP 103742 / CB 15) (Caulobacter crescentus).